A 26-amino-acid polypeptide reads, in one-letter code: uncharacterized protein (26 aa).

Its subcellular location is the plastid. The protein resides in the chloroplast. This is an uncharacterized protein from Trieres chinensis (Marine centric diatom).